Reading from the N-terminus, the 253-residue chain is Sulfate transporter CysZ (253 aa).

Transmembrane regions (helical) follow at residues 31–51 (FVIL…WWLF), 75–95 (LLWP…FSTI), 151–171 (IVLL…PVLW), and 222–242 (IPVL…AMWV).

This sequence belongs to the CysZ family.

The protein resides in the cell inner membrane. In terms of biological role, high affinity, high specificity proton-dependent sulfate transporter, which mediates sulfate uptake. Provides the sulfur source for the cysteine synthesis pathway. The polypeptide is Sulfate transporter CysZ (Citrobacter koseri (strain ATCC BAA-895 / CDC 4225-83 / SGSC4696)).